The chain runs to 5218 residues: HC-toxin synthetase (5218 aa).

The adenylation 1 stretch occupies residues 223–620 (SARAHEQDAN…VGRSDTQIKL (398 aa)). Residues 769-843 (MNDDSLLLTA…TAASCIKSAQ (75 aa)) form the Carrier 1 domain. The residue at position 803 (Ser-803) is an O-(pantetheine 4'-phosphoryl)serine. A condensation 1 region spans residues 858-1154 (IPVSPIQKLF…GWFTTISPVY (297 aa)). The segment at 1338-1806 (EGVYPGSPMQ…LPIVSEHDTA (469 aa)) is epimerization. The tract at residues 1828-2233 (SRKVVEHPQR…IGRKDTQVKM (406 aa)) is adenylation 2. Residues 2379–2453 (ETTDTVEDRL…DMAKLFSHGQ (75 aa)) enclose the Carrier 2 domain. Residue Ser-2414 is modified to O-(pantetheine 4'-phosphoryl)serine. The condensation 2 stretch occupies residues 2531–2929 (EDVFPCTPMQ…MEQFGHNLQT (399 aa)). The segment at 2979 to 3386 (LEETAQSQPA…GRKDGQIKLR (408 aa)) is adenylation 3. The 77-residue stretch at 3532–3608 (QVLTTNESVL…DMAGQISFVQ (77 aa)) folds into the Carrier 3 domain. Ser-3569 carries the O-(pantetheine 4'-phosphoryl)serine modification. Residues 3649 to 4102 (EDVYPCTPLQ…PALSEAHLAE (454 aa)) form a condensation 3 region. The segment at 4134–4530 (RRAQQSPNSQ…NLYYVRRKDS (397 aa)) is adenylation 4. The Carrier 4 domain maps to 4666-4740 (THTQKLLRQL…AMSSLIDEHN (75 aa)). Ser-4701 bears the O-(pantetheine 4'-phosphoryl)serine mark. Residues 4785–5101 (TLPCTEYQQM…SAIREFIPQA (317 aa)) are condensation 4.

This sequence belongs to the NRP synthetase family. Requires pantetheine 4'-phosphate as cofactor.

It functions in the pathway mycotoxin biosynthesis; HC-toxin biosynthesis. Functionally, non-ribosomal peptide synthetase, part of the diffuse TOX2 gene cluster that mediates the biosynthesis of the HC-toxin, cyclic tetrapeptide of structure cyclo(D-Pro-L-Ala-D-Ala-L-Aeo), where Aeo stands for 2-amino-9,10-epoxi-8-oxodecanoic acid. HC-toxin is a determinant of specificity and virulence in the interaction between the producing fungus and its host, maize. HTS1, contains four modules, one for each amino acid in HC-toxin, with the order of activation being most likely Pro, Ala, Ala, and Aeo. In addition, HTS1 has one epimerase domain between modules 1 and 2, which is responsible for epimerizing L-Pro to D-Pro. The absence of an epimerizing domain after module 3, for producing D-Ala, can be explained by the presence in the cluster of TOXG, an Ala racemase, which produces D-Ala for incorporation by HTS1 into HC-toxin. The sequence is that of HC-toxin synthetase from Cochliobolus carbonum (Maize leaf spot fungus).